A 272-amino-acid chain; its full sequence is uncharacterized protein (272 aa).

Residues 12 to 34 (FITG…DGAN), 39 to 40 (DI), 77 to 78 (DV), and asparagine 104 contribute to the NAD(+) site. Serine 153 lines the substrate pocket. The Proton acceptor role is filled by tyrosine 170. Residues lysine 174 and 203–205 (VDT) each bind NAD(+).

This sequence belongs to the short-chain dehydrogenases/reductases (SDR) family.

This is an uncharacterized protein from Mycobacterium tuberculosis (strain CDC 1551 / Oshkosh).